A 276-amino-acid chain; its full sequence is N-acyl homoserine lactonase AiiB (276 aa).

Residues H111, H113, H116, H191, D213, and H259 each coordinate Zn(2+).

This sequence belongs to the metallo-beta-lactamase superfamily. It depends on Zn(2+) as a cofactor.

The catalysed reaction is an N-acyl-L-homoserine lactone + H2O = an N-acyl-L-homoserine + H(+). The sequence is that of N-acyl homoserine lactonase AiiB from Agrobacterium fabrum (strain C58 / ATCC 33970) (Agrobacterium tumefaciens (strain C58)).